Consider the following 563-residue polypeptide: Cysteine--tRNA ligase, chloroplastic/mitochondrial (563 aa).

Residue C91 participates in Zn(2+) binding. Position 92 (G92) interacts with L-cysteine. The 'HIGH' region motif lies at 93-103 (VTAYDLSHIGH). T131 lines the L-cysteine pocket. The 'KIIK' region motif lies at 136–139 (KIIA). Residues C271, H296, and E300 each coordinate Zn(2+). L-cysteine is bound at residue H296. Positions 328 to 332 (KMSKS) match the 'KMSKS' region motif. K331 serves as a coordination point for ATP.

It belongs to the class-I aminoacyl-tRNA synthetase family. Zn(2+) serves as cofactor.

It localises to the plastid. It is found in the chloroplast. The protein resides in the mitochondrion. The catalysed reaction is tRNA(Cys) + L-cysteine + ATP = L-cysteinyl-tRNA(Cys) + AMP + diphosphate. Its function is as follows. Required for female gametophyte development. Is necessary for the fusion of central cell nuclei and programmed cell death (PCD) of the antipodals. The polypeptide is Cysteine--tRNA ligase, chloroplastic/mitochondrial (Arabidopsis thaliana (Mouse-ear cress)).